A 393-amino-acid polypeptide reads, in one-letter code: Putative serpin-Z6A (393 aa).

Residues 336-360 (GTEAAAATAVLMEGAARYAPPPPPR) are RCL.

It belongs to the serpin family.

Functionally, probable serine protease inhibitor. The protein is Putative serpin-Z6A of Oryza sativa subsp. japonica (Rice).